The following is a 454-amino-acid chain: Na(+)/H(+) antiporter NhaA (454 aa).

The next 10 helical transmembrane spans lie at Ile-22 to Phe-42, Met-64 to Leu-84, Leu-106 to Phe-126, Gly-150 to Ala-170, Leu-190 to Leu-210, Val-228 to Gly-248, Pro-284 to Glu-304, Leu-306 to Gly-326, Met-355 to Leu-375, and Ala-386 to Ser-406.

Belongs to the NhaA Na(+)/H(+) (TC 2.A.33) antiporter family.

The protein localises to the cell membrane. The enzyme catalyses Na(+)(in) + 2 H(+)(out) = Na(+)(out) + 2 H(+)(in). Na(+)/H(+) antiporter that extrudes sodium in exchange for external protons. This Bifidobacterium adolescentis (strain ATCC 15703 / DSM 20083 / NCTC 11814 / E194a) protein is Na(+)/H(+) antiporter NhaA.